A 325-amino-acid polypeptide reads, in one-letter code: WUSCHEL-related homeobox 8 (325 aa).

Positions 51–115 (DPKPRWNPKP…NRKSRAKHKL (65 aa)) form a DNA-binding region, homeobox; WUS-type.

It belongs to the WUS homeobox family. In terms of tissue distribution, expressed only in the egg cell. Not detected in the pollen tube. Expressed in the zygote, the basal cell, and later the suspensor. Expressed in all suspensor cells, except the hypophysis, and in the embryo surrounding region (ESR) endosperm cells. Strongly expressed in the suspensor cells, with a weak expression also detected throughout the developing embryo.

It is found in the nucleus. In terms of biological role, probable transcription factor, which may be involved in embryonic patterning. May be required for basal embryo development after fertilization. Acts partially redundantly with STIP in promoting embryonic cell division and proliferation. Promotes cotyledon boundary formation by maintaining the symmetry in CUC genes expression domains. This Arabidopsis thaliana (Mouse-ear cress) protein is WUSCHEL-related homeobox 8.